A 536-amino-acid polypeptide reads, in one-letter code: Glycine--tRNA ligase (536 aa).

Residues 56–67 (LVSPAGAPSTFE) form an insert region. Substrate is bound by residues Arg-106 and Glu-213. Residues 245 to 247 (RNE), 255 to 260 (FRSREF), and 333 to 334 (EL) each bind ATP. Substrate is bound at residue 260–264 (FEQME). The insert stretch occupies residues 350–372 (EGKLDPATNPMTVELNEHGKPKH). 396–400 (EPSAG) serves as a coordination point for substrate. ATP is bound at residue 400–403 (GADR).

This sequence belongs to the class-II aminoacyl-tRNA synthetase family. As to quaternary structure, homodimer.

It is found in the cytoplasm. It catalyses the reaction tRNA(Gly) + glycine + ATP = glycyl-tRNA(Gly) + AMP + diphosphate. Its function is as follows. Catalyzes the attachment of glycine to tRNA(Gly). The chain is Glycine--tRNA ligase from Rhodopirellula baltica (strain DSM 10527 / NCIMB 13988 / SH1).